Consider the following 213-residue polypeptide: tRNA (guanine-N(7)-)-methyltransferase (213 aa).

S-adenosyl-L-methionine is bound by residues glutamate 44, glutamate 69, asparagine 96, and aspartate 118. Aspartate 118 is an active-site residue. Lysine 122 lines the substrate pocket. An interaction with RNA region spans residues 124 to 129 (RHEKRR). Substrate is bound by residues aspartate 154 and 192–195 (TEYE).

It belongs to the class I-like SAM-binding methyltransferase superfamily. TrmB family.

The enzyme catalyses guanosine(46) in tRNA + S-adenosyl-L-methionine = N(7)-methylguanosine(46) in tRNA + S-adenosyl-L-homocysteine. It participates in tRNA modification; N(7)-methylguanine-tRNA biosynthesis. Its function is as follows. Catalyzes the formation of N(7)-methylguanine at position 46 (m7G46) in tRNA. In Latilactobacillus sakei subsp. sakei (strain 23K) (Lactobacillus sakei subsp. sakei), this protein is tRNA (guanine-N(7)-)-methyltransferase.